The following is a 347-amino-acid chain: Probable dual-specificity RNA methyltransferase RlmN (347 aa).

The active-site Proton acceptor is the Glu-94. One can recognise a Radical SAM core domain in the interval 100–319 (YPSRTIACIS…LDTLVKNGID (220 aa)). Cys-107 and Cys-334 are joined by a disulfide. [4Fe-4S] cluster is bound by residues Cys-114, Cys-118, and Cys-121. S-adenosyl-L-methionine is bound by residues 161-162 (GE), Ser-193, 216-218 (SLH), and Asn-292. Cys-334 acts as the S-methylcysteine intermediate in catalysis.

This sequence belongs to the radical SAM superfamily. RlmN family. The cofactor is [4Fe-4S] cluster.

The protein localises to the cytoplasm. The catalysed reaction is adenosine(2503) in 23S rRNA + 2 reduced [2Fe-2S]-[ferredoxin] + 2 S-adenosyl-L-methionine = 2-methyladenosine(2503) in 23S rRNA + 5'-deoxyadenosine + L-methionine + 2 oxidized [2Fe-2S]-[ferredoxin] + S-adenosyl-L-homocysteine. The enzyme catalyses adenosine(37) in tRNA + 2 reduced [2Fe-2S]-[ferredoxin] + 2 S-adenosyl-L-methionine = 2-methyladenosine(37) in tRNA + 5'-deoxyadenosine + L-methionine + 2 oxidized [2Fe-2S]-[ferredoxin] + S-adenosyl-L-homocysteine. Functionally, specifically methylates position 2 of adenine 2503 in 23S rRNA and position 2 of adenine 37 in tRNAs. The sequence is that of Probable dual-specificity RNA methyltransferase RlmN from Petrotoga mobilis (strain DSM 10674 / SJ95).